Here is a 476-residue protein sequence, read N- to C-terminus: Growth arrest-specific protein 7 (476 aa).

The region spanning methionine 1–lysine 62 is the SH3 domain. One can recognise a WW domain in the interval valine 77–serine 110. Residues threonine 100 to glutamate 171 form a disordered region. A compositionally biased stretch (low complexity) spans proline 108–serine 120. A phosphoserine mark is found at serine 117 and serine 163. The span at arginine 150–glutamate 171 shows a compositional bias: polar residues. The 261-residue stretch at threonine 196–aspartate 456 folds into the F-BAR domain. Residues glutamate 309 to isoleucine 419 adopt a coiled-coil conformation.

It localises to the cytoplasm. Its function is as follows. May play a role in promoting maturation and morphological differentiation of cerebellar neurons. The sequence is that of Growth arrest-specific protein 7 (GAS7) from Homo sapiens (Human).